The sequence spans 229 residues: Cytochrome c oxidase subunit 2 (229 aa).

At 1 to 26 (MSTWANLGLQDSASPLMEQLIFFHDH) the chain is on the mitochondrial intermembrane side. A helical transmembrane segment spans residues 27-48 (ALLILVMITVLVGYLMFMLFFN). The Mitochondrial matrix segment spans residues 49–62 (SYVNRFLLHGQLIE). A helical transmembrane segment spans residues 63-82 (MIWTILPAIILLFIAMPSLR). The Mitochondrial intermembrane portion of the chain corresponds to 83–229 (LLYLLDEINE…IKWISSTVNS (147 aa)). The Cu cation site is built by H161, C196, E198, C200, H204, and M207. E198 contacts Mg(2+).

It belongs to the cytochrome c oxidase subunit 2 family. As to quaternary structure, component of the cytochrome c oxidase (complex IV, CIV), a multisubunit enzyme composed of a catalytic core of 3 subunits and several supernumerary subunits. The complex exists as a monomer or a dimer and forms supercomplexes (SCs) in the inner mitochondrial membrane with ubiquinol-cytochrome c oxidoreductase (cytochrome b-c1 complex, complex III, CIII). Requires Cu cation as cofactor.

The protein resides in the mitochondrion inner membrane. The enzyme catalyses 4 Fe(II)-[cytochrome c] + O2 + 8 H(+)(in) = 4 Fe(III)-[cytochrome c] + 2 H2O + 4 H(+)(out). Its function is as follows. Component of the cytochrome c oxidase, the last enzyme in the mitochondrial electron transport chain which drives oxidative phosphorylation. The respiratory chain contains 3 multisubunit complexes succinate dehydrogenase (complex II, CII), ubiquinol-cytochrome c oxidoreductase (cytochrome b-c1 complex, complex III, CIII) and cytochrome c oxidase (complex IV, CIV), that cooperate to transfer electrons derived from NADH and succinate to molecular oxygen, creating an electrochemical gradient over the inner membrane that drives transmembrane transport and the ATP synthase. Cytochrome c oxidase is the component of the respiratory chain that catalyzes the reduction of oxygen to water. Electrons originating from reduced cytochrome c in the intermembrane space (IMS) are transferred via the dinuclear copper A center (CU(A)) of subunit 2 and heme A of subunit 1 to the active site in subunit 1, a binuclear center (BNC) formed by heme A3 and copper B (CU(B)). The BNC reduces molecular oxygen to 2 water molecules using 4 electrons from cytochrome c in the IMS and 4 protons from the mitochondrial matrix. The protein is Cytochrome c oxidase subunit 2 (mt:CoII) of Drosophila lowei (Fruit fly).